Consider the following 366-residue polypeptide: Ribosomal RNA large subunit methyltransferase M (366 aa).

S-adenosyl-L-methionine is bound by residues Ser188, 221 to 224, Asp240, Asp260, and Asp277; that span reads CPGG. Lys306 acts as the Proton acceptor in catalysis.

The protein belongs to the class I-like SAM-binding methyltransferase superfamily. RNA methyltransferase RlmE family. RlmM subfamily. Monomer.

Its subcellular location is the cytoplasm. It carries out the reaction cytidine(2498) in 23S rRNA + S-adenosyl-L-methionine = 2'-O-methylcytidine(2498) in 23S rRNA + S-adenosyl-L-homocysteine + H(+). Catalyzes the 2'-O-methylation at nucleotide C2498 in 23S rRNA. The polypeptide is Ribosomal RNA large subunit methyltransferase M (Musicola paradisiaca (strain Ech703) (Dickeya paradisiaca)).